We begin with the raw amino-acid sequence, 260 residues long: Aliphatic sulfonates import ATP-binding protein SsuB 1 (260 aa).

In terms of domain architecture, ABC transporter spans 29-243 (VRVDGLTRSF…DITDPRFAEL (215 aa)). 61–68 (GRSGCGKS) contacts ATP.

Belongs to the ABC transporter superfamily. Aliphatic sulfonates importer (TC 3.A.1.17.2) family. In terms of assembly, the complex is composed of two ATP-binding proteins (SsuB), two transmembrane proteins (SsuC) and a solute-binding protein (SsuA).

Its subcellular location is the cell membrane. It catalyses the reaction ATP + H2O + aliphatic sulfonate-[sulfonate-binding protein]Side 1 = ADP + phosphate + aliphatic sulfonateSide 2 + [sulfonate-binding protein]Side 1.. In terms of biological role, part of the ABC transporter complex SsuABC involved in aliphatic sulfonates import. Responsible for energy coupling to the transport system. The chain is Aliphatic sulfonates import ATP-binding protein SsuB 1 from Streptomyces avermitilis (strain ATCC 31267 / DSM 46492 / JCM 5070 / NBRC 14893 / NCIMB 12804 / NRRL 8165 / MA-4680).